A 539-amino-acid chain; its full sequence is Acid-sensing ion channel 4 (539 aa).

At M1 to T68 the chain is on the cytoplasmic side. Residues L69 to A89 traverse the membrane as a helical segment. Topologically, residues R90 to A438 are extracellular. 2 disulfide bridges follow: C118–C202 and C180–C187. N-linked (GlcNAc...) asparagine glycans are attached at residues N191, N243, N341, and N376. Cystine bridges form between C296-C375, C318-C371, C322-C369, C331-C353, and C333-C345. Residues L439–L459 traverse the membrane as a helical segment. Residues G452–S454 carry the GAS motif; ion selectivity filter motif. Residues E460 to C539 lie on the Cytoplasmic side of the membrane. Positions K500 to G531 are disordered.

Belongs to the amiloride-sensitive sodium channel (TC 1.A.6) family. ASIC4 subfamily. In terms of assembly, homotrimer. Heterotrimer; with other ASIC proteins producing functional channels.

Its subcellular location is the cell membrane. In terms of biological role, does not exhibit measurable stand-alone pH-gated sodium channel activity but may form pH-gated heterotrimeric sodium channels. Its activity could also depend on alternative gating mechanisms. The sequence is that of Acid-sensing ion channel 4 from Mus musculus (Mouse).